Consider the following 293-residue polypeptide: Short-chain dehydrogenase/reductase PhomF (293 aa).

The NADP(+) site is built by Ile-31 and Asn-102. Ser-175 (proton donor) is an active-site residue. NADP(+) is bound by residues Tyr-190, Lys-194, and Ser-225. Catalysis depends on Tyr-190, which acts as the Proton acceptor. The active-site Lowers pKa of active site Tyr is the Lys-194.

Belongs to the short-chain dehydrogenases/reductases (SDR) family.

Its function is as follows. Short-chain dehydrogenase/reductase; part of the gene cluster that mediates the biosynthesis of the phomopsins, a group of hexapeptide mycotoxins which infects lupins and causes lupinosis disease in livestock. The role of phomF within the phomopsins biosynthesis pathway has still to be determined. The pathway starts with the processing of the precursor phomA by several endopeptidases including kexin proteases as well as the cluster-specific S41 family peptidase phomP1 and the oligopeptidase phomG to produce 10 identical copies of the hexapeptide Tyr-Val-Ile-Pro-Ile-Asp. After being excised from the precursor peptide, the core peptides are cyclized and modified post-translationally by enzymes encoded within the gene cluster. The timing and order of proteolysis of the phomA precursor and PTMs are still unknown. Two tyrosinase-like enzymes, phomQ1 and phomQ2, catalyze the chlorination and hydroxylation of Tyr, respectively. PhomYb, is proposed to be involved in the construction of the macrocyclic structure. The other 4 ustYa family proteins may be involved in PTMs that generate the unique structure of phomopsin A. PhomYa is required for the hydroxylation of C-beta of Tyr. PhomYc, phomYd, and phomYe are responsible for the biosynthesis of 2,3-dehydroisoleucine (dIle), 2,3-dehydroaspartic acid (dAsp), and 3,4-dehydroproline (dPro), respectively. While dIle formation by phomYc is indispensable for the installation of dAsp by phomYd, the order of the other PTMs have not been elucidated yet. Most of the biosynthetic enzymes likely have broad substrate specificity, and thus, there might be a metabolic grid from a precursor to phomopsin A. The enzyme(s) responsible for the biosynthesis of 3,4-dehydrovaline (dVal) have also not been identified yet. Finally, phomM acts as an S-adenosylmethionine-dependent alpha-N-methyltransferase that catalyzes two successive N-methylation reactions, converting N-desmethyl-phomopsin A to phomopsin A and phomopsin A further to an N,N-dimethylated congener called phomopsin E. In Diaporthe leptostromiformis (Lupinosis disease fungus), this protein is Short-chain dehydrogenase/reductase PhomF.